Consider the following 1072-residue polypeptide: Carbamoyl phosphate synthase large chain (1072 aa).

The carboxyphosphate synthetic domain stretch occupies residues 1–401; it reads MPKYKDINKV…SLLKAVRSLE (401 aa). Residues Arg-129, Arg-169, Gly-175, Gly-176, Lys-208, Leu-210, Glu-215, Gly-241, Val-242, His-243, Gln-284, and Glu-298 each contribute to the ATP site. In terms of domain architecture, ATP-grasp 1 spans 133-327; it reads KRKMQEIGEP…IAKIAAKIAI (195 aa). Residues Gln-284, Glu-298, and Asn-300 each contribute to the Mg(2+) site. Mn(2+) contacts are provided by Gln-284, Glu-298, and Asn-300. Residues 402–544 are oligomerization domain; it reads IKAYGLRLNN…YIYSTYGEED (143 aa). Positions 545-929 are carbamoyl phosphate synthetic domain; it reads EVEIHDMPKV…ALYKALEGAG (385 aa). The ATP-grasp 2 domain maps to 671 to 861; it reads SKLLRELNIN…MVKLAVEVAL (191 aa). ATP contacts are provided by Arg-707, Lys-746, Ile-748, Glu-752, Gly-777, Val-778, His-779, Ser-780, Gln-820, and Glu-832. Residues Gln-820, Glu-832, and Asn-834 each contribute to the Mg(2+) site. Positions 820, 832, and 834 each coordinate Mn(2+). Positions 930-1072 constitute an MGS-like domain; the sequence is LKIPKKGKIL…QKDNVKNLVL (143 aa). The allosteric domain stretch occupies residues 930 to 1072; the sequence is LKIPKKGKIL…QKDNVKNLVL (143 aa).

This sequence belongs to the CarB family. As to quaternary structure, composed of two chains; the small (or glutamine) chain promotes the hydrolysis of glutamine to ammonia, which is used by the large (or ammonia) chain to synthesize carbamoyl phosphate. Tetramer of heterodimers (alpha,beta)4. It depends on Mg(2+) as a cofactor. Mn(2+) serves as cofactor.

The catalysed reaction is hydrogencarbonate + L-glutamine + 2 ATP + H2O = carbamoyl phosphate + L-glutamate + 2 ADP + phosphate + 2 H(+). It catalyses the reaction hydrogencarbonate + NH4(+) + 2 ATP = carbamoyl phosphate + 2 ADP + phosphate + 2 H(+). It functions in the pathway amino-acid biosynthesis; L-arginine biosynthesis; carbamoyl phosphate from bicarbonate: step 1/1. It participates in pyrimidine metabolism; UMP biosynthesis via de novo pathway; (S)-dihydroorotate from bicarbonate: step 1/3. In terms of biological role, large subunit of the glutamine-dependent carbamoyl phosphate synthetase (CPSase). CPSase catalyzes the formation of carbamoyl phosphate from the ammonia moiety of glutamine, carbonate, and phosphate donated by ATP, constituting the first step of 2 biosynthetic pathways, one leading to arginine and/or urea and the other to pyrimidine nucleotides. The large subunit (synthetase) binds the substrates ammonia (free or transferred from glutamine from the small subunit), hydrogencarbonate and ATP and carries out an ATP-coupled ligase reaction, activating hydrogencarbonate by forming carboxy phosphate which reacts with ammonia to form carbamoyl phosphate. This is Carbamoyl phosphate synthase large chain from Thermoanaerobacter pseudethanolicus (strain ATCC 33223 / 39E) (Clostridium thermohydrosulfuricum).